A 257-amino-acid polypeptide reads, in one-letter code: Thioredoxin-dependent peroxide reductase, mitochondrial (257 aa).

Residues 1–62 (MAAAAGRLLW…SAFSTSSSFH (62 aa)) constitute a mitochondrion transit peptide. A Thioredoxin domain is found at 64–222 (PAVTQHAPYF…TLRLVKAFQF (159 aa)). Position 84 is an N6-succinyllysine (K84). K92 carries the N6-acetyllysine; alternate modification. K92 is modified (N6-succinyllysine; alternate). C109 functions as the Cysteine sulfenic acid (-SOH) intermediate in the catalytic mechanism. The residue at position 147 (T147) is a Phosphothreonine.

This sequence belongs to the peroxiredoxin family. AhpC/Prx1 subfamily. Homodimer; disulfide-linked, upon oxidation. 6 homodimers assemble to form a ring-like dodecamer. Interacts with NEK6. Interacts with LRRK2. Interacts with MAP3K13. Interacts with RPS6KC1 (via PX domain). In terms of processing, phosphorylated by LRRK2; phosphorylation reduces perodixase activity. The enzyme can be inactivated by further oxidation of the cysteine sulfenic acid (C(P)-SOH) to sulphinic acid (C(P)-SO2H) and sulphonic acid (C(P)-SO3H) instead of its condensation to a disulfide bond. Post-translationally, S-palmitoylated. In terms of tissue distribution, housekeeping-type gene preferentially expressed in murine erythroleukemia (MEL) cells.

It is found in the mitochondrion. The protein resides in the cytoplasm. Its subcellular location is the early endosome. It carries out the reaction a hydroperoxide + [thioredoxin]-dithiol = an alcohol + [thioredoxin]-disulfide + H2O. Its function is as follows. Thiol-specific peroxidase that catalyzes the reduction of hydrogen peroxide and organic hydroperoxides to water and alcohols, respectively. Plays a role in cell protection against oxidative stress by detoxifying peroxides. Acts synergistically with MAP3K13 to regulate the activation of NF-kappa-B in the cytosol. Required for the maintenance of physical strength. This is Thioredoxin-dependent peroxide reductase, mitochondrial (Prdx3) from Mus musculus (Mouse).